Reading from the N-terminus, the 384-residue chain is Mitogen-activated protein kinase homolog 1 (384 aa).

The region spanning Y32–M319 is the Protein kinase domain. Residues I38–V46 and K61 each bind ATP. D158 serves as the catalytic Proton acceptor. T191 carries the phosphothreonine modification. The short motif at T191–Y193 is the TXY element. The residue at position 193 (Y193) is a Phosphotyrosine.

The protein belongs to the protein kinase superfamily. CMGC Ser/Thr protein kinase family. MAP kinase subfamily. It depends on Mg(2+) as a cofactor. Post-translationally, dually phosphorylated on Thr-191 and Tyr-193, which activates the enzyme. Expressed in vegetative organs such as leaf, root, or stem. In the reproductive organs, it is found in the ovary, but not in the stamen.

The catalysed reaction is L-seryl-[protein] + ATP = O-phospho-L-seryl-[protein] + ADP + H(+). It carries out the reaction L-threonyl-[protein] + ATP = O-phospho-L-threonyl-[protein] + ADP + H(+). Activated by tyrosine and threonine phosphorylation. The sequence is that of Mitogen-activated protein kinase homolog 1 (MPK1) from Petunia hybrida (Petunia).